The sequence spans 306 residues: Follistatin-related protein 1 (306 aa).

Residues 1-18 form the signal peptide; the sequence is MWKRWLALALVTIALVHG. Residues 28-51 enclose the Follistatin-like domain; sequence ICANVFCGAGRECAVTEKGEPTCL. 5 disulfide bridges follow: C29–C40, C34–C50, C52–C82, C56–C75, and C64–C96. The Kazal-like domain occupies 46–98; that stretch reads GEPTCLCIEQCKPHKRPVCGSNGKTYLNHCELHRDACLTGSKIQVDYDGHCKE. An N-linked (GlcNAc...) asparagine glycan is attached at N142. The 35-residue stretch at 142-176 folds into the EF-hand 1 domain; that stretch reads NYSEILDKYFKSFDNGDSHLDSSEFLKFVEQNETA. Residue S163 is modified to Phosphoserine. Residues N173 and N178 are each glycosylated (N-linked (GlcNAc...) asparagine). Positions 191–226 constitute an EF-hand 2 domain; it reads LRGLCVDALIELSDENADWKLSFQEFLKCLNPSFNP. A VWFC domain is found at 231–285; the sequence is CALEDETYADGAETEVDCNRCVCSCGHWVCTAMTCDGKNQKGVQTHTEEEMTRYA.

In terms of assembly, homodimer. Interacts with SCN10A. Interacts with DIP2A; DIP2A may act as a cell surface receptor for FSTL1. Interacts with BMP4. Interacts with CD14; this interaction promotes TL4-mediated signaling cascade.

It localises to the secreted. Secreted glycoprotein that is involved in various physiological processes, such as angiogenesis, regulation of the immune response, cell proliferation and differentiation. Plays a role in the development of the central nervous system, skeletal system, lungs, and ureter. Promotes endothelial cell survival, migration and differentiation into network structures in an AKT-dependent manner. Also promotes survival of cardiac myocytes. Initiates various signaling cascades by activating different receptors on the cell surface such as DIP2A, TLR4 or BMP receptors. This is Follistatin-related protein 1 (Fstl1) from Rattus norvegicus (Rat).